Reading from the N-terminus, the 369-residue chain is Ubiquinone biosynthesis O-methyltransferase, mitochondrial (369 aa).

A mitochondrion-targeting transit peptide spans 1–85; the sequence is MWSGRKLGSS…SFRYPWARLY (85 aa). Residue arginine 124 participates in S-adenosyl-L-methionine binding. An N6-acetyllysine mark is found at lysine 143 and lysine 149. Residues glycine 154 and aspartate 175 each coordinate S-adenosyl-L-methionine. Residue lysine 196 is modified to N6-acetyllysine. Serine 222 provides a ligand contact to S-adenosyl-L-methionine. Residues glutamate 223, glutamate 226, and histidine 227 each coordinate Mg(2+).

The protein belongs to the class I-like SAM-binding methyltransferase superfamily. UbiG/COQ3 family. In terms of assembly, component of a multi-subunit COQ enzyme complex, composed of at least COQ3, COQ4, COQ5, COQ6, COQ7 and COQ9. Mg(2+) is required as a cofactor.

The protein resides in the mitochondrion inner membrane. The enzyme catalyses 3,4-dihydroxy-5-(all-trans-decaprenyl)benzoate + S-adenosyl-L-methionine = 4-hydroxy-3-methoxy-5-(all-trans-decaprenyl)benzoate + S-adenosyl-L-homocysteine + H(+). It carries out the reaction a 3-demethylubiquinone + S-adenosyl-L-methionine = a ubiquinone + S-adenosyl-L-homocysteine. The catalysed reaction is 3-demethylubiquinol-10 + S-adenosyl-L-methionine = ubiquinol-10 + S-adenosyl-L-homocysteine + H(+). Its pathway is cofactor biosynthesis; ubiquinone biosynthesis. O-methyltransferase required for two non-consecutive steps during ubiquinone biosynthesis. Catalyzes the 2 O-methylation of 3,4-dihydroxy-5-(all-trans-decaprenyl)benzoic acid into 4-hydroxy-3-methoxy-5-(all-trans-decaprenyl)benzoic acid. Also catalyzes the last step of ubiquinone biosynthesis by mediating methylation of 3-demethylubiquinone into ubiquinone. Also able to mediate the methylation of 3-demethylubiquinol-10 into ubiquinol-10. This Homo sapiens (Human) protein is Ubiquinone biosynthesis O-methyltransferase, mitochondrial.